We begin with the raw amino-acid sequence, 185 residues long: Meiotic expression up-regulated protein 31 (185 aa).

The sequence is that of Meiotic expression up-regulated protein 31 (meu31) from Schizosaccharomyces pombe (strain 972 / ATCC 24843) (Fission yeast).